The chain runs to 527 residues: MTARAEYLDHEDFLYRSHKLQELSELGVVLYPYEFPGVFSCEDIKKTFASQELGNSEAAMSRSTPRVRFAGRLVLFRAMGKNAFGQILDHNQTIQVMFNREFTSVHGLSEDAEITPIKFIEKKLDLGDILGIDGYLFFTHSGELTVLVETVTLLCKSLLSLPDKHAGLSDKEVRYRKRWLDLISSREVSDTFVKRSYIIKLIRNYMDAHGFLEVETPILQNIYGGAEAKPFTTTMEALHSEMFLRISLEIALKKILVGGAPRIYELGKVFRNEGIDRTHNPEFTMIEAYAAYMDYKEVMVFVENLVEHLVRAVNHDNTSLVYSYWKHGPQEVDFKAPWIRMTMKESIATYAGIDVDVHSDQKLKEILKKKTTFPETAFATASRGMLIAALFDELVSDNLIAPHHITDHPVETTPLCKTLRSGDTAFVERFESFCLGKELCNAYSELNDPIRQRELLEQQHTKKELLPDSECHPIDEEFLEALCQGMPPAGGFGIGVDRLVMILTNAASIRDVLYFPVMRRFDAEKTN.

Mg(2+) contacts are provided by Glu-431 and Glu-438.

It belongs to the class-II aminoacyl-tRNA synthetase family. In terms of assembly, homodimer. Mg(2+) is required as a cofactor.

The protein resides in the cytoplasm. It catalyses the reaction tRNA(Lys) + L-lysine + ATP = L-lysyl-tRNA(Lys) + AMP + diphosphate. The chain is Lysine--tRNA ligase (lysS) from Chlamydia pneumoniae (Chlamydophila pneumoniae).